The primary structure comprises 120 residues: C-C motif chemokine 16 (120 aa).

Positions 1-23 (MKVSEAALSLLVLILIITSASRS) are cleaved as a signal peptide. Disulfide bonds link Cys-37–Cys-60 and Cys-38–Cys-76.

It belongs to the intercrine beta (chemokine CC) family. In terms of tissue distribution, mainly expressed in liver, also found in spleen and thymus. Highly expressed in LPS- and IFN-gamma-activated monocytes, weakly in some lymphocytes, including natural killer cells, gamma-delta T-cells, and some T-cell clones.

Its subcellular location is the secreted. Functionally, shows chemotactic activity for lymphocytes and monocytes but not neutrophils. Also shows potent myelosuppressive activity, suppresses proliferation of myeloid progenitor cells. Recombinant SCYA16 shows chemotactic activity for monocytes and THP-1 monocytes, but not for resting lymphocytes and neutrophils. Induces a calcium flux in THP-1 cells that were desensitized by prior expression to RANTES. This chain is C-C motif chemokine 16 (CCL16), found in Homo sapiens (Human).